The following is a 439-amino-acid chain: Methionine aminopeptidase 2-1 (439 aa).

Positions Met1 to Pro87 are disordered. Positions Gly22 to Gly32 are enriched in acidic residues. Basic residues predominate over residues Lys47 to Ser61. Position 190 (His190) interacts with substrate. 3 residues coordinate a divalent metal cation: Asp211, Asp222, and His291. His299 contributes to the substrate binding site. A divalent metal cation-binding residues include Glu324 and Glu420.

The protein belongs to the peptidase M24A family. Methionine aminopeptidase eukaryotic type 2 subfamily. It depends on Co(2+) as a cofactor. Zn(2+) is required as a cofactor. Requires Mn(2+) as cofactor. Fe(2+) serves as cofactor.

The protein resides in the cytoplasm. It carries out the reaction Release of N-terminal amino acids, preferentially methionine, from peptides and arylamides.. Functionally, cotranslationally removes the N-terminal methionine from nascent proteins. The N-terminal methionine is often cleaved when the second residue in the primary sequence is small and uncharged (Met-Ala-, Cys, Gly, Pro, Ser, Thr, or Val). The sequence is that of Methionine aminopeptidase 2-1 from Chaetomium globosum (strain ATCC 6205 / CBS 148.51 / DSM 1962 / NBRC 6347 / NRRL 1970) (Soil fungus).